The primary structure comprises 627 residues: 1-deoxy-D-xylulose-5-phosphate synthase (627 aa).

Thiamine diphosphate-binding positions include H80 and 121-123 (GHS). D152 contributes to the Mg(2+) binding site. Residues 153-154 (GA), N181, Y288, and E370 contribute to the thiamine diphosphate site. N181 contributes to the Mg(2+) binding site.

It belongs to the transketolase family. DXPS subfamily. In terms of assembly, homodimer. The cofactor is Mg(2+). Requires thiamine diphosphate as cofactor.

The catalysed reaction is D-glyceraldehyde 3-phosphate + pyruvate + H(+) = 1-deoxy-D-xylulose 5-phosphate + CO2. Its pathway is metabolic intermediate biosynthesis; 1-deoxy-D-xylulose 5-phosphate biosynthesis; 1-deoxy-D-xylulose 5-phosphate from D-glyceraldehyde 3-phosphate and pyruvate: step 1/1. Functionally, catalyzes the acyloin condensation reaction between C atoms 2 and 3 of pyruvate and glyceraldehyde 3-phosphate to yield 1-deoxy-D-xylulose-5-phosphate (DXP). The polypeptide is 1-deoxy-D-xylulose-5-phosphate synthase (Aliivibrio fischeri (strain ATCC 700601 / ES114) (Vibrio fischeri)).